The sequence spans 227 residues: Cytochrome c oxidase subunit 2 (227 aa).

Residues 1-14 lie on the Mitochondrial intermembrane side of the membrane; it reads MAYPFQLGLQDATS. Residues 15 to 45 traverse the membrane as a helical segment; the sequence is PIMEELLHFHDHTLMIVFLISSLVLYIISSM. At 46–59 the chain is on the mitochondrial matrix side; the sequence is LTTKLTHTSTMDAQ. The helical transmembrane segment at 60 to 87 threads the bilayer; it reads EVETVWTILPAIILVLIALPSLRILYMM. The Mitochondrial intermembrane segment spans residues 88-227; sequence DEINNPSLTV…YFETWSALML (140 aa). Residues His161, Cys196, Glu198, Cys200, His204, and Met207 each contribute to the Cu cation site. A Mg(2+)-binding site is contributed by Glu198. A Phosphotyrosine modification is found at Tyr218.

The protein belongs to the cytochrome c oxidase subunit 2 family. Component of the cytochrome c oxidase (complex IV, CIV), a multisubunit enzyme composed of 14 subunits. The complex is composed of a catalytic core of 3 subunits MT-CO1, MT-CO2 and MT-CO3, encoded in the mitochondrial DNA, and 11 supernumerary subunits COX4I, COX5A, COX5B, COX6A, COX6B, COX6C, COX7A, COX7B, COX7C, COX8 and NDUFA4, which are encoded in the nuclear genome. The complex exists as a monomer or a dimer and forms supercomplexes (SCs) in the inner mitochondrial membrane with NADH-ubiquinone oxidoreductase (complex I, CI) and ubiquinol-cytochrome c oxidoreductase (cytochrome b-c1 complex, complex III, CIII), resulting in different assemblies (supercomplex SCI(1)III(2)IV(1) and megacomplex MCI(2)III(2)IV(2)). Found in a complex with TMEM177, COA6, COX18, COX20, SCO1 and SCO2. Interacts with TMEM177 in a COX20-dependent manner. Interacts with COX20. Interacts with COX16. Cu cation is required as a cofactor.

It is found in the mitochondrion inner membrane. The enzyme catalyses 4 Fe(II)-[cytochrome c] + O2 + 8 H(+)(in) = 4 Fe(III)-[cytochrome c] + 2 H2O + 4 H(+)(out). In terms of biological role, component of the cytochrome c oxidase, the last enzyme in the mitochondrial electron transport chain which drives oxidative phosphorylation. The respiratory chain contains 3 multisubunit complexes succinate dehydrogenase (complex II, CII), ubiquinol-cytochrome c oxidoreductase (cytochrome b-c1 complex, complex III, CIII) and cytochrome c oxidase (complex IV, CIV), that cooperate to transfer electrons derived from NADH and succinate to molecular oxygen, creating an electrochemical gradient over the inner membrane that drives transmembrane transport and the ATP synthase. Cytochrome c oxidase is the component of the respiratory chain that catalyzes the reduction of oxygen to water. Electrons originating from reduced cytochrome c in the intermembrane space (IMS) are transferred via the dinuclear copper A center (CU(A)) of subunit 2 and heme A of subunit 1 to the active site in subunit 1, a binuclear center (BNC) formed by heme A3 and copper B (CU(B)). The BNC reduces molecular oxygen to 2 water molecules using 4 electrons from cytochrome c in the IMS and 4 protons from the mitochondrial matrix. This is Cytochrome c oxidase subunit 2 (MT-CO2) from Speothos venaticus (Bush dog).